The chain runs to 326 residues: Prenyl transferase nodC (326 aa).

Residues 8 to 28 (LAAVLFSALFSLGVILVHLPW) traverse the membrane as a helical segment. Position 95 (His-95) interacts with isopentenyl diphosphate. Mg(2+) is bound by residues Asp-102 and Asp-106. Arg-111 contacts dimethylallyl diphosphate. Asn-139 is a glycosylation site (N-linked (GlcNAc...) asparagine). Position 195 (Lys-195) interacts with dimethylallyl diphosphate. Residue Asn-210 is glycosylated (N-linked (GlcNAc...) asparagine).

Belongs to the FPP/GGPP synthase family.

It localises to the membrane. The protein operates within secondary metabolite biosynthesis. Cytochrome P450 monooxygenase; part of the gene cluster that mediates the biosynthesis of the indole diterpenes nodulisporic acids (NA). Nodulisporic acid A (NAA) and its chemically modified derivatives are of particular significance because of their highly potent insecticidal activity against blood-feeding arthropods and lack of observable adverse effects on mammals, in particular the tremogenicity associated with the paspaline-derived IDTs is not observed. The geranylgeranyl diphosphate (GGPP) synthase ggs1, localized outside of the cluster, is proposed to catalyze the first step in nodulisporic acid biosynthesis via conversion of farnesyl pyrophosphate and isopentyl pyrophosphate into geranylgeranyl pyrophosphate (GGPP). Condensation of indole-3-glycerol phosphate with GGPP by the prenyl transferase nodC then forms 3-geranylgeranylindole (3-GGI). Epoxidation by the FAD-dependent monooxygenase nodM leads to a single-epoxidized-GGI that is substrate of the terpene cyclase nodB for cyclization to yield emindole SB. The terminal methyl carbon, C28, of emindole SB is then oxidized by the cytochrome P450 monooxygenase nodW to produce nodulisporic acid F (NAF), the pentacyclic core of NAA. NAF is converted to nodulisporic acid E (NAE) via prenylation. This step is probably performed by one of the indole diterpene prenyltransferases nodD1 or nodD2. Several oxidation steps performed by the FAD-linked oxidoreductase nodO and one of the cytochrome P450 monooxygenase nodR, nodX or nodZ further convert NAE to nodulisporic acid D (NAD). NAD is substrate of cytochrome P450 monooxygenase nodJ to produce the precursor of nodulisporic acid C (NAC), converted to NAC by one of the indole diterpene prenyltransferases nodD1 or nodD2. The FAD-dependent monooxygenase nodY2 then oxidizes NAC to nodulisporic acid B (NAB). Finally NAB is converted to NAA by one of the cytochrome P450 monooxygenases nodR, nodX or nodZ. The sequence is that of Prenyl transferase nodC from Hypoxylon pulicicidum.